The primary structure comprises 871 residues: DNA mismatch repair protein MutS (871 aa).

605–612 (GPNMGGKS) is a binding site for ATP. A disordered region spans residues 791–840 (PQRPTSASVEQPVDSAKTETAATAEEPQQLSLFPTDEETKPKQPTKKERS). The span at 827–840 (EETKPKQPTKKERS) shows a compositional bias: basic and acidic residues.

It belongs to the DNA mismatch repair MutS family.

Its function is as follows. This protein is involved in the repair of mismatches in DNA. It is possible that it carries out the mismatch recognition step. This protein has a weak ATPase activity. This chain is DNA mismatch repair protein MutS, found in Shouchella clausii (strain KSM-K16) (Alkalihalobacillus clausii).